Consider the following 750-residue polypeptide: Polyribonucleotide nucleotidyltransferase (750 aa).

Mg(2+) contacts are provided by Asp489 and Asp495. One can recognise a KH domain in the interval 556–620 (PKMITRRIPN…EGIDKVIAKI (65 aa)). The S1 motif domain occupies 630 to 701 (GSVYEVKVIK…KTRKDKVSRK (72 aa)). The disordered stretch occupies residues 697–750 (KVSRKALMEKPEGYKERAPRDRDDKRGSRDNNRGRDNRGRDNRRDDRKPRENKD). Residues 702–750 (ALMEKPEGYKERAPRDRDDKRGSRDNNRGRDNRGRDNRRDDRKPRENKD) are compositionally biased toward basic and acidic residues.

The protein belongs to the polyribonucleotide nucleotidyltransferase family. Mg(2+) is required as a cofactor.

The protein resides in the cytoplasm. The enzyme catalyses RNA(n+1) + phosphate = RNA(n) + a ribonucleoside 5'-diphosphate. Involved in mRNA degradation. Catalyzes the phosphorolysis of single-stranded polyribonucleotides processively in the 3'- to 5'-direction. In Christiangramia forsetii (strain DSM 17595 / CGMCC 1.15422 / KT0803) (Gramella forsetii), this protein is Polyribonucleotide nucleotidyltransferase.